The sequence spans 317 residues: tRNA pseudouridine synthase B (317 aa).

D47 serves as the catalytic Nucleophile.

It belongs to the pseudouridine synthase TruB family. Type 1 subfamily.

The catalysed reaction is uridine(55) in tRNA = pseudouridine(55) in tRNA. Functionally, responsible for synthesis of pseudouridine from uracil-55 in the psi GC loop of transfer RNAs. The sequence is that of tRNA pseudouridine synthase B from Shewanella sp. (strain MR-4).